The chain runs to 162 residues: EF-hand calcium-binding domain-containing protein 11 (162 aa).

EF-hand domains follow at residues 18 to 53 (SERR…LFGY), 91 to 126 (LYRN…VAPK), and 127 to 162 (LPAR…GQSK). 5 residues coordinate Ca(2+): Asp-140, Asp-142, Asp-144, His-146, and Asp-151.

The sequence is that of EF-hand calcium-binding domain-containing protein 11 (Efcab11) from Mus musculus (Mouse).